Consider the following 433-residue polypeptide: Sulfhydrylase FUB7 (433 aa).

Lysine 211 is subject to N6-(pyridoxal phosphate)lysine.

It belongs to the trans-sulfuration enzymes family. It depends on pyridoxal 5'-phosphate as a cofactor.

The protein operates within mycotoxin biosynthesis. In terms of biological role, sulfhydrylase; part of the gene cluster that mediates the biosynthesis of fusaric acid, a mycotoxin with low to moderate toxicity to animals and humans, but with high phytotoxic properties. L-aspartate is suggested as fusaric acid amino acid precursor that is activated and further processed to O-acetyl-L-homoserine by cluster enzymes aspartate kinase FUB3 and homoserine O-acetyltransferase FUB5, as well as enzymes of the primary metabolism. The polyketide synthase (PKS) FUB1 generates the triketide trans-2-hexenal which is presumptively released by the hydrolase FUB4 and linked to the NRPS-bound amino acid precursor by NAD(P)-dependent dehydrogenase FUB6. FUB1, FUB4, and the non-canonical NRPS Fub8 may form an enzyme complex. Further processing of the NRPS-bound intermediate might be carried out by FUB6 and the sulfhydrylase FUB7, enabling a spontaneous electrocyclization to close the carbon backbone of fusaric acid. Dihydrofusaric acid is likely to be released via reduction by the thioester reductase (TR) domain of FUB8 whereupon the final oxidation to fusaric acid may (also) be performed by the FMN-dependent dehydrogenase FUB9. The polypeptide is Sulfhydrylase FUB7 (Fusarium oxysporum f. sp. lycopersici (strain 4287 / CBS 123668 / FGSC 9935 / NRRL 34936) (Fusarium vascular wilt of tomato)).